Reading from the N-terminus, the 251-residue chain is Hydroxyacylglutathione hydrolase (251 aa).

Residues His53, His55, Asp57, His58, His110, Asp127, and His165 each coordinate Zn(2+).

The protein belongs to the metallo-beta-lactamase superfamily. Glyoxalase II family. Monomer. Requires Zn(2+) as cofactor.

It carries out the reaction an S-(2-hydroxyacyl)glutathione + H2O = a 2-hydroxy carboxylate + glutathione + H(+). The protein operates within secondary metabolite metabolism; methylglyoxal degradation; (R)-lactate from methylglyoxal: step 2/2. Its function is as follows. Thiolesterase that catalyzes the hydrolysis of S-D-lactoyl-glutathione to form glutathione and D-lactic acid. This chain is Hydroxyacylglutathione hydrolase, found in Escherichia coli O6:K15:H31 (strain 536 / UPEC).